A 618-amino-acid chain; its full sequence is Proline--tRNA ligase (618 aa).

It belongs to the class-II aminoacyl-tRNA synthetase family. ProS type 1 subfamily. As to quaternary structure, homodimer.

The protein localises to the cytoplasm. The catalysed reaction is tRNA(Pro) + L-proline + ATP = L-prolyl-tRNA(Pro) + AMP + diphosphate. Its function is as follows. Catalyzes the attachment of proline to tRNA(Pro) in a two-step reaction: proline is first activated by ATP to form Pro-AMP and then transferred to the acceptor end of tRNA(Pro). As ProRS can inadvertently accommodate and process non-cognate amino acids such as alanine and cysteine, to avoid such errors it has two additional distinct editing activities against alanine. One activity is designated as 'pretransfer' editing and involves the tRNA(Pro)-independent hydrolysis of activated Ala-AMP. The other activity is designated 'posttransfer' editing and involves deacylation of mischarged Ala-tRNA(Pro). The misacylated Cys-tRNA(Pro) is not edited by ProRS. The chain is Proline--tRNA ligase from Streptococcus equi subsp. zooepidemicus (strain H70).